We begin with the raw amino-acid sequence, 299 residues long: Ribosomal RNA small subunit methyltransferase A (299 aa).

6 residues coordinate S-adenosyl-L-methionine: asparagine 44, valine 46, glycine 71, glutamate 92, aspartate 122, and asparagine 141.

It belongs to the class I-like SAM-binding methyltransferase superfamily. rRNA adenine N(6)-methyltransferase family. RsmA subfamily.

It localises to the cytoplasm. The enzyme catalyses adenosine(1518)/adenosine(1519) in 16S rRNA + 4 S-adenosyl-L-methionine = N(6)-dimethyladenosine(1518)/N(6)-dimethyladenosine(1519) in 16S rRNA + 4 S-adenosyl-L-homocysteine + 4 H(+). Its function is as follows. Specifically dimethylates two adjacent adenosines (A1518 and A1519) in the loop of a conserved hairpin near the 3'-end of 16S rRNA in the 30S particle. May play a critical role in biogenesis of 30S subunits. The chain is Ribosomal RNA small subunit methyltransferase A from Rhodococcus erythropolis (strain PR4 / NBRC 100887).